Consider the following 78-residue polypeptide: Structural DNA-binding protein p10 (78 aa).

Positions 1–25 are enriched in low complexity; that stretch reads MPTKAGTKSTANKKTTKGSSKSGSA. The segment at 1–41 is disordered; sequence MPTKAGTKSTANKKTTKGSSKSGSARGHTGKTHAPPSMHSG.

It belongs to the asfivirus P10 family.

It localises to the virion. Functionally, may play a role in genome packaging through direct interaction with viral DNA. Binds to ssDNA and dsDNA with the same apparent affinity in vitro. This is Structural DNA-binding protein p10 from African swine fever virus (isolate Warthog/Namibia/Wart80/1980) (ASFV).